The sequence spans 473 residues: Purple acid phosphatase 1 (473 aa).

The signal sequence occupies residues 1-38; sequence MRLVVVGLWCLILGLILNPTKFCDAGVTSSYVRKSLSA. An N-linked (GlcNAc...) asparagine glycan is attached at N118. Residue D172 participates in Fe cation binding. Residue N180 is glycosylated (N-linked (GlcNAc...) asparagine). 2 residues coordinate Fe cation: D201 and Y204. D201 contributes to the Mn(2+) binding site. N238 is a binding site for Mn(2+). N238 contacts substrate. N311 is a glycosylation site (N-linked (GlcNAc...) asparagine). H323 lines the Mn(2+) pocket. H333 (proton donor) is an active-site residue. H360 lines the Mn(2+) pocket. 360–362 contributes to the substrate binding site; it reads HVH. Residue H362 coordinates Fe cation. N433 is a glycosylation site (N-linked (GlcNAc...) asparagine).

This sequence belongs to the metallophosphoesterase superfamily. Purple acid phosphatase family. As to quaternary structure, homodimer; disulfide-linked. Fe cation serves as cofactor. The cofactor is Mn(2+). Requires Zn(2+) as cofactor. Cu(2+) is required as a cofactor. It depends on Mg(2+) as a cofactor.

It is found in the secreted. The enzyme catalyses a phosphate monoester + H2O = an alcohol + phosphate. In Ipomoea batatas (Sweet potato), this protein is Purple acid phosphatase 1 (PAP1).